Here is a 151-residue protein sequence, read N- to C-terminus: Small ribosomal subunit protein uS15 (151 aa).

Basic residues predominate over residues 1–16 (MPHRSRHKKGRSRSVR). Residues 1 to 21 (MPHRSRHKKGRSRSVRPAHPT) are disordered.

It belongs to the universal ribosomal protein uS15 family. As to quaternary structure, part of the 30S ribosomal subunit.

In Pyrobaculum islandicum (strain DSM 4184 / JCM 9189 / GEO3), this protein is Small ribosomal subunit protein uS15.